A 195-amino-acid polypeptide reads, in one-letter code: MKKKVLAIALVTVFTGMGVAQAADVTAQAVATWSATAKKDTTSKLVVTPLGSLAFQYAEGIKGFNSQKGLFDVAIEGDSTATAFKLTSRLITNTLTQLDTSGSTLNVGVDYNGAAVEKTGDTVMIDTANGVLGGNLSPLANGYNASNRTTAQDGFTFTIISGTTNGTTAVTDYSTLPEGIWSGDVSVQFDATWTS.

A signal peptide spans 1–22 (MKKKVLAIALVTVFTGMGVAQA).

This sequence belongs to the EcpA/MatB fimbrillin family. As to quaternary structure, self-associates. Forms filaments. Interacts with EcpD.

It localises to the fimbrium. Functionally, part of the ecpRABCDE operon, which encodes the E.coli common pilus (ECP). ECP is found in both commensal and pathogenic strains and plays a dual role in early-stage biofilm development and host cell recognition. Major subunit of the fimbria. The sequence is that of Common pilus major fimbrillin subunit EcpA (ecpA) from Escherichia coli O139:H28 (strain E24377A / ETEC).